The primary structure comprises 171 residues: Ribosome maturation factor RimP (171 aa).

Belongs to the RimP family.

It is found in the cytoplasm. Its function is as follows. Required for maturation of 30S ribosomal subunits. This Anaeromyxobacter dehalogenans (strain 2CP-C) protein is Ribosome maturation factor RimP.